We begin with the raw amino-acid sequence, 186 residues long: Elongation factor P (186 aa).

Belongs to the elongation factor P family.

Its subcellular location is the cytoplasm. It functions in the pathway protein biosynthesis; polypeptide chain elongation. Its function is as follows. Involved in peptide bond synthesis. Stimulates efficient translation and peptide-bond synthesis on native or reconstituted 70S ribosomes in vitro. Probably functions indirectly by altering the affinity of the ribosome for aminoacyl-tRNA, thus increasing their reactivity as acceptors for peptidyl transferase. The sequence is that of Elongation factor P from Prochlorococcus marinus (strain MIT 9312).